The sequence spans 206 residues: Holliday junction branch migration complex subunit RuvA (206 aa).

Residues methionine 1–isoleucine 64 are domain I. Positions aspartate 65 to alanine 142 are domain II. The interval threonine 143 to proline 154 is flexible linker. The interval serine 155–alanine 206 is domain III.

The protein belongs to the RuvA family. As to quaternary structure, homotetramer. Forms an RuvA(8)-RuvB(12)-Holliday junction (HJ) complex. HJ DNA is sandwiched between 2 RuvA tetramers; dsDNA enters through RuvA and exits via RuvB. An RuvB hexamer assembles on each DNA strand where it exits the tetramer. Each RuvB hexamer is contacted by two RuvA subunits (via domain III) on 2 adjacent RuvB subunits; this complex drives branch migration. In the full resolvosome a probable DNA-RuvA(4)-RuvB(12)-RuvC(2) complex forms which resolves the HJ.

It is found in the cytoplasm. In terms of biological role, the RuvA-RuvB-RuvC complex processes Holliday junction (HJ) DNA during genetic recombination and DNA repair, while the RuvA-RuvB complex plays an important role in the rescue of blocked DNA replication forks via replication fork reversal (RFR). RuvA specifically binds to HJ cruciform DNA, conferring on it an open structure. The RuvB hexamer acts as an ATP-dependent pump, pulling dsDNA into and through the RuvAB complex. HJ branch migration allows RuvC to scan DNA until it finds its consensus sequence, where it cleaves and resolves the cruciform DNA. In Teredinibacter turnerae (strain ATCC 39867 / T7901), this protein is Holliday junction branch migration complex subunit RuvA.